Here is a 368-residue protein sequence, read N- to C-terminus: Probable endopolygalacturonase I (368 aa).

Positions 1 to 18 (MRSVEILGLAALGSLVAA) are cleaved as a signal peptide. Residues 19–31 (APSPSRVSNSAKK) constitute a propeptide that is removed on maturation. Cysteines 35 and 50 form a disulfide. PbH1 repeat units lie at residues 162–192 (ATNL…DIGE) and 193–214 (SNGV…AINS). Asp207 functions as the Proton donor in the catalytic mechanism. Cys209 and Cys225 are disulfide-bonded. The active site involves His229. PbH1 repeat units lie at residues 244–265 (VKNV…RIKT), 273–295 (VGDV…VIEQ), and 307–328 (TTGV…ASNA). An N-linked (GlcNAc...) asparagine glycan is attached at Asn246. 2 disulfide bridges follow: Cys335–Cys340 and Cys359–Cys368.

It belongs to the glycosyl hydrolase 28 family.

It is found in the secreted. The catalysed reaction is (1,4-alpha-D-galacturonosyl)n+m + H2O = (1,4-alpha-D-galacturonosyl)n + (1,4-alpha-D-galacturonosyl)m.. Involved in maceration and soft-rotting of plant tissue. Hydrolyzes the 1,4-alpha glycosidic bonds of de-esterified pectate in the smooth region of the plant cell wall. The sequence is that of Probable endopolygalacturonase I (pgaI) from Aspergillus clavatus (strain ATCC 1007 / CBS 513.65 / DSM 816 / NCTC 3887 / NRRL 1 / QM 1276 / 107).